Here is a 291-residue protein sequence, read N- to C-terminus: Glucose and ribitol dehydrogenase (291 aa).

The segment at 1–35 (MASGGQFPPQKQESQPGKEHLMDPSPQHASPHYKP) is disordered. NAD(+) is bound at residue 45–69 (LVTGGDSGIGRSVCYHFALEGATVA). Substrate is bound at residue serine 183. Tyrosine 196 functions as the Proton acceptor in the catalytic mechanism.

The protein belongs to the short-chain dehydrogenases/reductases (SDR) family. As to expression, expressed in embryogenic cells, somatic embryos and seeds in the later stages of development, but not in non-embryogenic cells and mature leaves.

Functionally, may act as a short alcohol-polyol-sugar dehydrogenase possibly related to carbohydrate metabolism and the acquisition of desiccation tolerance. May also be involved in signal transduction. This Daucus carota (Wild carrot) protein is Glucose and ribitol dehydrogenase (CAISE5).